Consider the following 339-residue polypeptide: Glyoxylate reductase (339 aa).

NADP(+) contacts are provided by residues 157 to 160 (LGRI) and 239 to 241 (TAR). Active-site residues include arginine 241 and glutamate 270. The active-site Proton donor is the histidine 289. An NADP(+)-binding site is contributed by 289 to 291 (HIA).

Belongs to the D-isomer specific 2-hydroxyacid dehydrogenase family. GyaR subfamily. In terms of assembly, homodimer.

It localises to the cytoplasm. It catalyses the reaction glycolate + NAD(+) = glyoxylate + NADH + H(+). The polypeptide is Glyoxylate reductase (Thermofilum pendens (strain DSM 2475 / Hrk 5)).